The sequence spans 948 residues: MAQQYQPGQRWISDSEAELGLGTVLAQDGRLLTVLYPATGETRQYALRNAPLTRVRFSPGDVITHFENWKMTVREVDDVDGLLVYHGLNAQNEVVTLPETQLSNFIQFRLATDRLFAGQIDQLSWFSLRYNTLEHTSRQLQSSLWGLGGVRAQPIAHQLHIAREVADRIAPRVLLADEVGLGKTIEAGLVIHRQLLSGRANRVLILVPENLQHQWLVEMRRRFNLQVALFDAERFMESDAGNPFEDTQLALVALEWLVEDEKAQDALFAAGWDLMVVDEAHHLVWHEEKASREYSLVEQLAEVIAGVLLLTATPEQLGQDSHFARLRLLDPNRFHDLKAFRAESENYRPVAQAVQELLDKGKLSAAAQKTIHGFLGAEGDTLLAAVNAGDDEAKARLIRELLDRHGTGRVLFRNTRAAVQGFPERKLHQYPLPCPVEYLELPVGEHADLYPEVSFQSQSDASEEERWWRFDPRVEWLIDTLKMLKRVKVLVICAHAETAMDLEDALRVRSGIPATVFHEGMNILERDRAAAYFADEEFGAQVLICSEIGSEGRNFQFSHHLVLFDLPSHPDLLEQRIGRLDRIGQKHVIELHVPFLETSPQARLFQWYHEALNAFLNTCPTGNALQHQFGPRLLPLLESGDDDEWQSLIDEARSERERLESELHTGRDRLLELNSGGAGEGEALVEDILEQDDQFSLPIYMETLFDAFGIDSEDHSENALILKPSEKMLDASFPLGDDEGVTITYDRNQALSREDMQFITWEHPMVQGGMDLVLSGSMGNTAVALIKNKALKPGTVLLELIYVSEVVAPRSLQLGRYLPPAALRCLLDANGNDLSSRVSFNTLNDQLESVPRASANKFIQAQRDQLTPRINAGEEKITPKHAERVAEAQRRLAADTEEELARLTALQAVNPTVRDSELVALRTQREQGLAMLEKAALRLEAIRVLVAG.

The Helicase ATP-binding domain occupies 164 to 332; the sequence is EVADRIAPRV…FARLRLLDPN (169 aa). 177–184 contacts ATP; that stretch reads DEVGLGKT. The DEAH box motif lies at 278–281; it reads DEAH. The 155-residue stretch at 473–627 folds into the Helicase C-terminal domain; sequence RVEWLIDTLK…TCPTGNALQH (155 aa).

It belongs to the SNF2/RAD54 helicase family. RapA subfamily. Interacts with the RNAP. Has a higher affinity for the core RNAP than for the holoenzyme. Its ATPase activity is stimulated by binding to RNAP.

Transcription regulator that activates transcription by stimulating RNA polymerase (RNAP) recycling in case of stress conditions such as supercoiled DNA or high salt concentrations. Probably acts by releasing the RNAP, when it is trapped or immobilized on tightly supercoiled DNA. Does not activate transcription on linear DNA. Probably not involved in DNA repair. The chain is RNA polymerase-associated protein RapA from Pseudomonas syringae pv. tomato (strain ATCC BAA-871 / DC3000).